Reading from the N-terminus, the 469-residue chain is Glutamine synthetase (469 aa).

In terms of domain architecture, GS beta-grasp spans 15–96 (EDVKFVDVRF…INFFIHDPIT (82 aa)). In terms of domain architecture, GS catalytic spans 104 to 469 (PRNVAKKAEA…PHEFEMYFDV (366 aa)). Residues Glu-129 and Glu-131 each contribute to the Mg(2+) site. Glu-205 contributes to the ATP binding site. Residues Glu-210 and Glu-218 each coordinate Mg(2+). 221–223 (YKF) is a binding site for ATP. L-glutamate contacts are provided by residues 262–263 (NG) and Gly-263. His-267 serves as a coordination point for Mg(2+). Residues 269–271 (HQS) and Ser-271 each bind ATP. 3 residues coordinate L-glutamate: Arg-320, Glu-326, and Arg-338. ATP is bound by residues Arg-338, Arg-343, and Lys-352. Glu-357 contacts Mg(2+). Arg-359 contributes to the L-glutamate binding site. Tyr-397 bears the O-AMP-tyrosine mark.

The protein belongs to the glutamine synthetase family. As to quaternary structure, oligomer of 12 subunits arranged in the form of two hexagons. The cofactor is Mg(2+).

It is found in the cytoplasm. It catalyses the reaction L-glutamate + NH4(+) + ATP = L-glutamine + ADP + phosphate + H(+). With respect to regulation, the activity of this enzyme could be controlled by adenylation under conditions of abundant glutamine. Functionally, catalyzes the ATP-dependent biosynthesis of glutamine from glutamate and ammonia. Complements L-glutamine auxotrophy of an E.coli glnA mutant. This chain is Glutamine synthetase, found in Streptomyces coelicolor (strain ATCC BAA-471 / A3(2) / M145).